Consider the following 289-residue polypeptide: 4-diphosphocytidyl-2-C-methyl-D-erythritol kinase (289 aa).

Lys11 is a catalytic residue. ATP is bound at residue 95-105 (PMGGGIGGGSS). Asp137 is a catalytic residue.

Belongs to the GHMP kinase family. IspE subfamily.

The catalysed reaction is 4-CDP-2-C-methyl-D-erythritol + ATP = 4-CDP-2-C-methyl-D-erythritol 2-phosphate + ADP + H(+). It functions in the pathway isoprenoid biosynthesis; isopentenyl diphosphate biosynthesis via DXP pathway; isopentenyl diphosphate from 1-deoxy-D-xylulose 5-phosphate: step 3/6. In terms of biological role, catalyzes the phosphorylation of the position 2 hydroxy group of 4-diphosphocytidyl-2C-methyl-D-erythritol. The polypeptide is 4-diphosphocytidyl-2-C-methyl-D-erythritol kinase (Aeromonas hydrophila subsp. hydrophila (strain ATCC 7966 / DSM 30187 / BCRC 13018 / CCUG 14551 / JCM 1027 / KCTC 2358 / NCIMB 9240 / NCTC 8049)).